The sequence spans 551 residues: Ubiquitin carboxyl-terminal hydrolase 24 (551 aa).

Disordered regions lie at residues 51–104 (NSSV…SLRV) and 163–188 (NEDFSSDSSSGSIQRKKNLKVPTESV). The 355-residue stretch at 197-551 (RGLINAGNLC…QAYVLFYKQV (355 aa)) folds into the USP domain. The active-site Nucleophile is the cysteine 206. The span at 329–338 (SKSSVISSAN) shows a compositional bias: polar residues. The disordered stretch occupies residues 329–349 (SKSSVISSANDDGDEWETVGP). Catalysis depends on histidine 510, which acts as the Proton acceptor.

This sequence belongs to the peptidase C19 family.

The enzyme catalyses Thiol-dependent hydrolysis of ester, thioester, amide, peptide and isopeptide bonds formed by the C-terminal Gly of ubiquitin (a 76-residue protein attached to proteins as an intracellular targeting signal).. Recognizes and hydrolyzes the peptide bond at the C-terminal Gly of ubiquitin. Involved in the processing of poly-ubiquitin precursors as well as that of ubiquitinated proteins. The chain is Ubiquitin carboxyl-terminal hydrolase 24 (UBP24) from Arabidopsis thaliana (Mouse-ear cress).